The sequence spans 170 residues: Large ribosomal subunit protein uL5 (170 aa).

The protein belongs to the universal ribosomal protein uL5 family. Part of the 50S ribosomal subunit; contacts the 5S rRNA and probably tRNA. Forms a bridge to the 30S subunit in the 70S ribosome.

Its function is as follows. This is one of the proteins that bind and probably mediate the attachment of the 5S RNA into the large ribosomal subunit, where it forms part of the central protuberance. In the 70S ribosome it contacts protein S13 of the 30S subunit (bridge B1b), connecting the 2 subunits; this bridge is implicated in subunit movement. May contact the P site tRNA; the 5S rRNA and some of its associated proteins might help stabilize positioning of ribosome-bound tRNAs. This Thermoplasma volcanium (strain ATCC 51530 / DSM 4299 / JCM 9571 / NBRC 15438 / GSS1) protein is Large ribosomal subunit protein uL5.